A 91-amino-acid polypeptide reads, in one-letter code: Small ribosomal subunit protein uS19 (91 aa).

Belongs to the universal ribosomal protein uS19 family.

In terms of biological role, protein S19 forms a complex with S13 that binds strongly to the 16S ribosomal RNA. In Bordetella pertussis (strain Tohama I / ATCC BAA-589 / NCTC 13251), this protein is Small ribosomal subunit protein uS19.